Reading from the N-terminus, the 360-residue chain is MAVQKVKLFTEAPFTLSLGGTLQDIEIAYQTYGELNKEKTNAILICHALTGDAEPYFADHSQRGWWQTFMGEGLALDTSQYFFICSNVLGGCKGTTGPSSINPKTNKPYGSQFPNIIVQDIVALQRALLTHLNIPRLHAVIGGSFGGMQATQWAIDYPDDVSNVINLCSSLLFGAEAIGFNHVMRQAVINDPNFNGGDYYDSQPPEKGLAIARMLGMLTYRTDLQLTKAFGRATKAETEFWGDYFQVESYLSYQGKKFLARFDANSYLHLLRALDLYDPGFQYESLSAALARIKARYTLVAVENDQLFKLTELQKSKKLLEESGVDLVYYQFSSDYGHDAFLVDYAFFEKKIRLALANQD.

Residues 41–344 form the AB hydrolase-1 domain; it reads NAILICHALT…DYGHDAFLVD (304 aa). Ser-144 functions as the Nucleophile in the catalytic mechanism. Arg-213 lines the substrate pocket. Catalysis depends on residues Asp-305 and His-338. Asp-339 contributes to the substrate binding site.

It belongs to the AB hydrolase superfamily. MetX family. In terms of assembly, homodimer.

Its subcellular location is the cytoplasm. It carries out the reaction L-homoserine + acetyl-CoA = O-acetyl-L-homoserine + CoA. It participates in amino-acid biosynthesis; L-methionine biosynthesis via de novo pathway; O-acetyl-L-homoserine from L-homoserine: step 1/1. Transfers an acetyl group from acetyl-CoA to L-homoserine, forming acetyl-L-homoserine. The polypeptide is Homoserine O-acetyltransferase (Pasteurella multocida (strain Pm70)).